Here is a 603-residue protein sequence, read N- to C-terminus: Proline--tRNA ligase (603 aa).

This sequence belongs to the class-II aminoacyl-tRNA synthetase family. ProS type 1 subfamily. In terms of assembly, homodimer.

The protein localises to the cytoplasm. It carries out the reaction tRNA(Pro) + L-proline + ATP = L-prolyl-tRNA(Pro) + AMP + diphosphate. In terms of biological role, catalyzes the attachment of proline to tRNA(Pro) in a two-step reaction: proline is first activated by ATP to form Pro-AMP and then transferred to the acceptor end of tRNA(Pro). As ProRS can inadvertently accommodate and process non-cognate amino acids such as alanine and cysteine, to avoid such errors it has two additional distinct editing activities against alanine. One activity is designated as 'pretransfer' editing and involves the tRNA(Pro)-independent hydrolysis of activated Ala-AMP. The other activity is designated 'posttransfer' editing and involves deacylation of mischarged Ala-tRNA(Pro). The misacylated Cys-tRNA(Pro) is not edited by ProRS. This chain is Proline--tRNA ligase, found in Paenarthrobacter aurescens (strain TC1).